A 352-amino-acid polypeptide reads, in one-letter code: Uroporphyrinogen decarboxylase (352 aa).

Substrate is bound by residues 29 to 33, F48, D78, Y154, S209, and H322; that span reads RQAGR.

Belongs to the uroporphyrinogen decarboxylase family. In terms of assembly, homodimer.

The protein localises to the cytoplasm. It carries out the reaction uroporphyrinogen III + 4 H(+) = coproporphyrinogen III + 4 CO2. The protein operates within porphyrin-containing compound metabolism; protoporphyrin-IX biosynthesis; coproporphyrinogen-III from 5-aminolevulinate: step 4/4. In terms of biological role, catalyzes the decarboxylation of four acetate groups of uroporphyrinogen-III to yield coproporphyrinogen-III. In Bacillus pumilus (strain SAFR-032), this protein is Uroporphyrinogen decarboxylase.